The sequence spans 150 residues: Large ribosomal subunit protein bL9 (150 aa).

Belongs to the bacterial ribosomal protein bL9 family.

In terms of biological role, binds to the 23S rRNA. The sequence is that of Large ribosomal subunit protein bL9 from Streptococcus mutans serotype c (strain ATCC 700610 / UA159).